Here is a 276-residue protein sequence, read N- to C-terminus: Large ribosomal subunit protein uL2 (276 aa).

Residues 224–276 (VMNPVDHPHGGGEGKAPIGRKSPMTPWGKPTLGYKTRKKKNKSDKFIIRRRKK) form a disordered region. Over residues 258 to 276 (KTRKKKNKSDKFIIRRRKK) the composition is skewed to basic residues.

Belongs to the universal ribosomal protein uL2 family. Part of the 50S ribosomal subunit. Forms a bridge to the 30S subunit in the 70S ribosome.

In terms of biological role, one of the primary rRNA binding proteins. Required for association of the 30S and 50S subunits to form the 70S ribosome, for tRNA binding and peptide bond formation. It has been suggested to have peptidyltransferase activity; this is somewhat controversial. Makes several contacts with the 16S rRNA in the 70S ribosome. The protein is Large ribosomal subunit protein uL2 of Geobacillus thermodenitrificans (strain NG80-2).